A 94-amino-acid polypeptide reads, in one-letter code: Small ribosomal subunit protein bS6 (94 aa).

This sequence belongs to the bacterial ribosomal protein bS6 family.

Functionally, binds together with bS18 to 16S ribosomal RNA. The chain is Small ribosomal subunit protein bS6 from Clostridium botulinum (strain Loch Maree / Type A3).